The following is a 418-amino-acid chain: Pyrophosphate--fructose 6-phosphate 1-phosphotransferase (418 aa).

Position 13 (Gly13) interacts with diphosphate. Asn111 is a binding site for Mg(2+). Substrate contacts are provided by residues 139 to 141 (TID), 187 to 189 (MGR), Glu244, and 295 to 298 (YLQR). Catalysis depends on Asp141, which acts as the Proton acceptor.

This sequence belongs to the phosphofructokinase type A (PFKA) family. PPi-dependent PFK group II subfamily. Clade 'B2' sub-subfamily. Homodimer. Mg(2+) is required as a cofactor.

The protein localises to the cytoplasm. The enzyme catalyses beta-D-fructose 6-phosphate + diphosphate = beta-D-fructose 1,6-bisphosphate + phosphate + H(+). The protein operates within carbohydrate degradation; glycolysis; D-glyceraldehyde 3-phosphate and glycerone phosphate from D-glucose: step 3/4. With respect to regulation, non-allosteric. Its function is as follows. Catalyzes the phosphorylation of D-fructose 6-phosphate, the first committing step of glycolysis. Uses inorganic phosphate (PPi) as phosphoryl donor instead of ATP like common ATP-dependent phosphofructokinases (ATP-PFKs), which renders the reaction reversible, and can thus function both in glycolysis and gluconeogenesis. Consistently, PPi-PFK can replace the enzymes of both the forward (ATP-PFK) and reverse (fructose-bisphosphatase (FBPase)) reactions. This Xanthomonas campestris pv. campestris (strain B100) protein is Pyrophosphate--fructose 6-phosphate 1-phosphotransferase.